We begin with the raw amino-acid sequence, 332 residues long: RNA polymerase sigma-B factor (332 aa).

The Polymerase core binding signature appears at 125-138 (DLIQEGALGLERGV). The H-T-H motif DNA-binding region spans 294–313 (LVQISQRMGISRERVRQVEK).

The protein belongs to the sigma-70 factor family.

Sigma factors are initiation factors that promote the attachment of RNA polymerase to specific initiation sites and are then released. This Nostoc sp. (strain PCC 7120 / SAG 25.82 / UTEX 2576) protein is RNA polymerase sigma-B factor (sigB).